A 243-amino-acid chain; its full sequence is Zwei Ig domain protein zig-6 (243 aa).

The signal sequence occupies residues 1–20 (MTKLCLLLLPLVFLVSYSFA). Ig-like C2-type domains follow at residues 30 to 118 (PNAN…MDVI) and 133 to 212 (GQVL…KTVT). Cys47 and Cys102 are oxidised to a cystine. N-linked (GlcNAc...) asparagine glycans are attached at residues Asn91 and Asn142. A disulfide bond links Cys145 and Cys196.

In terms of tissue distribution, expressed in head and tail body wall muscles.

It localises to the secreted. Probably not involved in maintaining the position of ASI and ASH head neuron cell bodies and ventral nerve cord axons of PVQ, PVP, RMEV, AVK and HSN neurons. This is Zwei Ig domain protein zig-6 from Caenorhabditis elegans.